The chain runs to 389 residues: Acetylornithine aminotransferase (389 aa).

Pyridoxal 5'-phosphate is bound by residues 104–105 (GT) and F131. A N(2)-acetyl-L-ornithine-binding site is contributed by R134. 216–219 (DEVQ) serves as a coordination point for pyridoxal 5'-phosphate. Residue K245 is modified to N6-(pyridoxal phosphate)lysine. Residue S273 coordinates N(2)-acetyl-L-ornithine. T274 lines the pyridoxal 5'-phosphate pocket.

The protein belongs to the class-III pyridoxal-phosphate-dependent aminotransferase family. ArgD subfamily. Homodimer. Requires pyridoxal 5'-phosphate as cofactor.

The protein localises to the cytoplasm. The enzyme catalyses N(2)-acetyl-L-ornithine + 2-oxoglutarate = N-acetyl-L-glutamate 5-semialdehyde + L-glutamate. Its pathway is amino-acid biosynthesis; L-arginine biosynthesis; N(2)-acetyl-L-ornithine from L-glutamate: step 4/4. This Methanopyrus kandleri (strain AV19 / DSM 6324 / JCM 9639 / NBRC 100938) protein is Acetylornithine aminotransferase.